We begin with the raw amino-acid sequence, 123 residues long: Small ribosomal subunit protein uS12cz/uS12cy (123 aa).

The protein belongs to the universal ribosomal protein uS12 family. In terms of assembly, part of the 30S ribosomal subunit.

The protein resides in the plastid. It localises to the chloroplast. In terms of biological role, with S4 and S5 plays an important role in translational accuracy. Located at the interface of the 30S and 50S subunits. The sequence is that of Small ribosomal subunit protein uS12cz/uS12cy (rps12-A) from Drimys granadensis.